The sequence spans 177 residues: Novel acetylcholine receptor chaperone (177 aa).

Residues M1 to R5 are Cytoplasmic-facing. The chain crosses the membrane as a helical span at residues T6–I26. Topologically, residues K27 to S61 are lumenal. The interaction with NGFR stretch occupies residues A43 to L54. The helical transmembrane segment at I62–V82 threads the bilayer. At P83 to D88 the chain is on the cytoplasmic side. Residues V89–G109 form a helical membrane-spanning segment. Over D110–R114 the chain is Lumenal. The helical transmembrane segment at Y115–A132 threads the bilayer. Over R133 to S177 the chain is Cytoplasmic. Positions E136 to S177 are disordered.

Belongs to the DoxX family. In terms of assembly, may interact with NGFR. Interacts with RPN1, RPN2 and CANX.

It is found in the peroxisome membrane. The protein localises to the cytoplasmic vesicle. The protein resides in the endoplasmic reticulum membrane. Molecular chaperone which mediates the proper assembly and functional expression of the nicotinic acetylcholine receptors (nAChRs) throughout the brain. Essential for the proper folding, assembly, function and surface trafficking of alpha-7 (CHRNA7), alpha-4-beta-2, alpha-3-beta-2 and alpha-3-beta-4 receptors. Stably associates with ribophorin-1 (RPN1) and ribophorin-2 (RPN2) (components of the oligosaccharyl transferase (OST) complex) and with calnexin (CANX), both of which are critical for NACHO-mediated effects on CHRNA7 assembly and function. Facilitates the proper folding and assembly of alpha-6-beta-2 and alpha-6-beta-2-beta-3 receptors and acts at early stages of the nAChRs subunit assembly. Promotes the expression of the alpha-4(2):beta-2(3) stoichiometric form over the alpha-4(3):beta-2(2) form. In Bos taurus (Bovine), this protein is Novel acetylcholine receptor chaperone (TMEM35A).